Here is a 113-residue protein sequence, read N- to C-terminus: Photosystem II reaction center Psb28 protein (113 aa).

It belongs to the Psb28 family. In terms of assembly, part of the photosystem II complex.

The protein resides in the cellular thylakoid membrane. In Trichodesmium erythraeum (strain IMS101), this protein is Photosystem II reaction center Psb28 protein.